The sequence spans 522 residues: MSSRPLESPPPYRPDEFKPNHYAPSNDIYGGEMHVRPMLSQPAYSFYPEDEILHFYKWTSPPGVIRILSMLIIVMCIAIFACVASTLAWDRGYGTSLLGGSVGYPYGGSGFGSYGSGYGYGYGYGYGYGGYTDPRAAKGFMLAMAAFCFIAALVIFVTSVIRSEMSRTRRYYLSVIIVSAILGIMVFIATIVYIMGVNPTAQSSGSLYGSQIYALCNQFYTPAATGLYVDQYLYHYCVVDPQEAIAIVLGFMIIVAFALIIFFAVKTRRKMDRYDKSNILWDKEHIYDEQPPNVEEWVKNVSAGTQDVPSPPSDYVERVDSPMAYSSNGKVNDKRFYPESSYKSTPVPEVVQELPLTSPVDDFRQPRYSSGGNFETPSKRAPAKGRAGRSKRTEQDHYETDYTTGGESCDELEEDWIREYPPITSDQQRQLYKRNFDTGLQEYKSLQSELDEINKELSRLDKELDDYREESEEYMAAADEYNRLKQVKGSADYKSKKNHCKQLKSKLSHIKKMVGDYDRQKT.

Residues 1–20 are disordered; that stretch reads MSSRPLESPPPYRPDEFKPN. The Cytoplasmic segment spans residues 1–66; sequence MSSRPLESPP…KWTSPPGVIR (66 aa). The MARVEL domain maps to 60 to 269; the sequence is SPPGVIRILS…IIFFAVKTRR (210 aa). A helical membrane pass occupies residues 67–89; it reads ILSMLIIVMCIAIFACVASTLAW. Residues 90–135 lie on the Extracellular side of the membrane; the sequence is DRGYGTSLLGGSVGYPYGGSGFGSYGSGYGYGYGYGYGYGGYTDPR. A helical membrane pass occupies residues 136 to 160; it reads AAKGFMLAMAAFCFIAALVIFVTSV. Topologically, residues 161–170 are cytoplasmic; the sequence is IRSEMSRTRR. Residues 171-195 form a helical membrane-spanning segment; the sequence is YYLSVIIVSAILGIMVFIATIVYIM. Residues 196–243 lie on the Extracellular side of the membrane; the sequence is GVNPTAQSSGSLYGSQIYALCNQFYTPAATGLYVDQYLYHYCVVDPQE. Cysteines 216 and 237 form a disulfide. The helical transmembrane segment at 244–265 threads the bilayer; it reads AIAIVLGFMIIVAFALIIFFAV. Over 266–522 the chain is Cytoplasmic; the sequence is KTRRKMDRYD…MVGDYDRQKT (257 aa). Ser302 carries the post-translational modification Phosphoserine. Phosphothreonine is present on Thr305. Ser313, Ser321, and Ser340 each carry phosphoserine. Residues 360–407 are disordered; the sequence is VDDFRQPRYSSGGNFETPSKRAPAKGRAGRSKRTEQDHYETDYTTGGE. Positions 367–376 are enriched in polar residues; it reads RYSSGGNFET. Tyr368 carries the phosphotyrosine modification. 2 positions are modified to phosphoserine: Ser369 and Ser370. The segment covering 381–390 has biased composition (basic residues); the sequence is APAKGRAGRS. Basic and acidic residues predominate over residues 391–400; sequence KRTEQDHYET. 2 positions are modified to phosphotyrosine: Tyr398 and Tyr402. A phosphothreonine; by PKC/PRKCH mark is found at Thr403 and Thr404. Position 408 is a phosphoserine (Ser408). The OCEL domain maps to 414–522; that stretch reads EDWIREYPPI…MVGDYDRQKT (109 aa). Residues 426 to 489 adopt a coiled-coil conformation; it reads DQQRQLYKRN…EYNRLKQVKG (64 aa). A Phosphoserine modification is found at Ser490.

It belongs to the ELL/occludin family. Interacts with TJP1/ZO1. Interacts with VAPA. Interacts with CLDN1, CLDN6, CLDN9, CLDN11, CLDN12 and CLDN17. Interacts with PLSCR1. Interacts with LSR, ILDR1 and ILDR2. Interacts with TJP2/ZO2. In terms of processing, dephosphorylated by PTPRJ. The tyrosine phosphorylation on Tyr-398 and Tyr-402 reduces its ability to interact with TJP1. Phosphorylation at Ser-490 also attenuates the interaction with TJP1. (Microbial infection) Cleaved by S.pyogenes SpeB protease; leading to its degradation. Degradation by SpeB promotes bacterial translocation across the host epithelial barrier. As to expression, localized at tight junctions of both epithelial and endothelial cells. Highly expressed in kidney. Not detected in testis.

It is found in the cell membrane. It localises to the cell junction. The protein localises to the tight junction. Its function is as follows. May play a role in the formation and regulation of the tight junction (TJ) paracellular permeability barrier. It is able to induce adhesion when expressed in cells lacking tight junctions. (Microbial infection) Acts as a coreceptor for hepatitis C virus (HCV) in hepatocytes. This Homo sapiens (Human) protein is Occludin (OCLN).